We begin with the raw amino-acid sequence, 178 residues long: Small ribosomal subunit protein uS5 (178 aa).

Residues 15–78 (FEEKIIEIRR…ADAKKNVIEV (64 aa)) form the S5 DRBM domain.

Belongs to the universal ribosomal protein uS5 family. As to quaternary structure, part of the 30S ribosomal subunit. Contacts proteins S4 and S8.

Its function is as follows. With S4 and S12 plays an important role in translational accuracy. In terms of biological role, located at the back of the 30S subunit body where it stabilizes the conformation of the head with respect to the body. In Thermotoga neapolitana (strain ATCC 49049 / DSM 4359 / NBRC 107923 / NS-E), this protein is Small ribosomal subunit protein uS5.